The following is a 232-amino-acid chain: Putative quercetin 2,3-dioxygenase PA1210 (232 aa).

4 residues coordinate a divalent metal cation: histidine 57, histidine 59, histidine 101, and glutamate 103.

The protein belongs to the pirin family. A divalent metal cation serves as cofactor.

It carries out the reaction quercetin + O2 = 2-(3,4-dihydroxybenzoyloxy)-4,6-dihydroxybenzoate + CO. It functions in the pathway flavonoid metabolism; quercetin degradation. In terms of biological role, putative quercetin 2,3-dioxygenase. This chain is Putative quercetin 2,3-dioxygenase PA1210, found in Pseudomonas aeruginosa (strain ATCC 15692 / DSM 22644 / CIP 104116 / JCM 14847 / LMG 12228 / 1C / PRS 101 / PAO1).